We begin with the raw amino-acid sequence, 141 residues long: 3-hydroxyacyl-[acyl-carrier-protein] dehydratase FabZ (141 aa).

Residue H49 is part of the active site.

The protein belongs to the thioester dehydratase family. FabZ subfamily.

The protein resides in the cytoplasm. The enzyme catalyses a (3R)-hydroxyacyl-[ACP] = a (2E)-enoyl-[ACP] + H2O. In terms of biological role, involved in unsaturated fatty acids biosynthesis. Catalyzes the dehydration of short chain beta-hydroxyacyl-ACPs and long chain saturated and unsaturated beta-hydroxyacyl-ACPs. The polypeptide is 3-hydroxyacyl-[acyl-carrier-protein] dehydratase FabZ (Fusobacterium nucleatum subsp. nucleatum (strain ATCC 25586 / DSM 15643 / BCRC 10681 / CIP 101130 / JCM 8532 / KCTC 2640 / LMG 13131 / VPI 4355)).